The sequence spans 256 residues: Ribosomal RNA small subunit methyltransferase J (256 aa).

Residues 101–102 (RD), 117–118 (ER), 153–154 (SS), and aspartate 176 each bind S-adenosyl-L-methionine.

This sequence belongs to the methyltransferase superfamily. RsmJ family.

Its subcellular location is the cytoplasm. It catalyses the reaction guanosine(1516) in 16S rRNA + S-adenosyl-L-methionine = N(2)-methylguanosine(1516) in 16S rRNA + S-adenosyl-L-homocysteine + H(+). In terms of biological role, specifically methylates the guanosine in position 1516 of 16S rRNA. This chain is Ribosomal RNA small subunit methyltransferase J, found in Photobacterium profundum (strain SS9).